A 295-amino-acid polypeptide reads, in one-letter code: MNETESEMQARLLAKALPFMQRYENKTIVVKYGGHAMGNPELGKAFASDIALLKQSGVNPIVVHGGGPQIGAMLSKMGIESKFEGGLRVTDQKTVEIVEMVLAGSINKEIVALINQTGEWAIGLCGKDGNMVFAEKARKTVKDPDSNIERVLDLGFVGEVVEVDRTLLDLLARSEMIPVIAPVAPGRDGATYNINADTFAGAIAGALNATRLLFLTDVPGVLDKNGQLIKELSVAEAHALIADGTISGGMIPKVETCIDAIKAGVQGVVILNGKTAHSVLLEIFTEHGVGTLIVP.

Residues glycine 66–glycine 67, arginine 88, and asparagine 193 contribute to the substrate site.

This sequence belongs to the acetylglutamate kinase family. ArgB subfamily.

It localises to the cytoplasm. It catalyses the reaction N-acetyl-L-glutamate + ATP = N-acetyl-L-glutamyl 5-phosphate + ADP. Its pathway is amino-acid biosynthesis; L-arginine biosynthesis; N(2)-acetyl-L-ornithine from L-glutamate: step 2/4. Catalyzes the ATP-dependent phosphorylation of N-acetyl-L-glutamate. This Rhizobium johnstonii (strain DSM 114642 / LMG 32736 / 3841) (Rhizobium leguminosarum bv. viciae) protein is Acetylglutamate kinase.